The chain runs to 110 residues: Small ribosomal subunit protein uS10 (110 aa).

Belongs to the universal ribosomal protein uS10 family. As to quaternary structure, part of the 30S ribosomal subunit.

In terms of biological role, involved in the binding of tRNA to the ribosomes. The sequence is that of Small ribosomal subunit protein uS10 from Ehrlichia ruminantium (strain Gardel).